The sequence spans 388 residues: Probable tRNA sulfurtransferase (388 aa).

Residues 55 to 162 enclose the THUMP domain; it reads VTLDDKLKKI…PEGVLIFTDR (108 aa). ATP-binding positions include 180 to 181, 205 to 206, Arg264, Gly286, and Gln295; these read LL and TF.

This sequence belongs to the ThiI family.

The protein resides in the cytoplasm. It carries out the reaction [ThiI sulfur-carrier protein]-S-sulfanyl-L-cysteine + a uridine in tRNA + 2 reduced [2Fe-2S]-[ferredoxin] + ATP + H(+) = [ThiI sulfur-carrier protein]-L-cysteine + a 4-thiouridine in tRNA + 2 oxidized [2Fe-2S]-[ferredoxin] + AMP + diphosphate. The catalysed reaction is [ThiS sulfur-carrier protein]-C-terminal Gly-Gly-AMP + S-sulfanyl-L-cysteinyl-[cysteine desulfurase] + AH2 = [ThiS sulfur-carrier protein]-C-terminal-Gly-aminoethanethioate + L-cysteinyl-[cysteine desulfurase] + A + AMP + 2 H(+). It functions in the pathway cofactor biosynthesis; thiamine diphosphate biosynthesis. Catalyzes the ATP-dependent transfer of a sulfur to tRNA to produce 4-thiouridine in position 8 of tRNAs, which functions as a near-UV photosensor. Also catalyzes the transfer of sulfur to the sulfur carrier protein ThiS, forming ThiS-thiocarboxylate. This is a step in the synthesis of thiazole, in the thiamine biosynthesis pathway. The sulfur is donated as persulfide by IscS. The polypeptide is Probable tRNA sulfurtransferase (Thermotoga maritima (strain ATCC 43589 / DSM 3109 / JCM 10099 / NBRC 100826 / MSB8)).